The primary structure comprises 56 residues: RPYACELTVAAGPCLRFSAFYYSKGANQCYPFNYSGCGGNANRFSTNQKCRRTCVV.

3 cysteine pairs are disulfide-bonded: cysteine 5/cysteine 54, cysteine 14/cysteine 37, and cysteine 29/cysteine 50. One can recognise a BPTI/Kunitz inhibitor domain in the interval 5-56; the sequence is CELTVAAGPCLRFSAFYYSKGANQCYPFNYSGCGGNANRFSTNQKCRRTCVV.

The protein belongs to the venom Kunitz-type family. Expressed by the venom gland.

Its subcellular location is the secreted. Functionally, interacts with vasopressin V2 receptor (V2R/AVPR2), probably in a selective manner. Inhibits vasopressin binding human V2R in the nanomolar range (Ki=45.1 nM), and also potently inhibits vasopressin-induced cAMP production (IC(50)=111 nM). In vivo, intraperitoneal injection of this protein into rats increases diuresis, without any loss of electrolytes. The chain is Mambaquaretin-9 from Dendroaspis viridis (Western green mamba).